The sequence spans 137 residues: Methylglyoxal synthase (137 aa).

The region spanning 1–137 is the MGS-like domain; that stretch reads MNIALVAHDQ…EVRKSKSQRI (137 aa). Substrate-binding positions include His-8, Lys-12, 34 to 37, and 54 to 55; these read TGTT and SG. Asp-60 functions as the Proton donor/acceptor in the catalytic mechanism. His-87 contributes to the substrate binding site.

This sequence belongs to the methylglyoxal synthase family.

The enzyme catalyses dihydroxyacetone phosphate = methylglyoxal + phosphate. Its function is as follows. Catalyzes the formation of methylglyoxal from dihydroxyacetone phosphate. The chain is Methylglyoxal synthase from Clostridioides difficile (strain 630) (Peptoclostridium difficile).